Consider the following 683-residue polypeptide: DNA-directed RNA polymerase subunit beta' (683 aa).

C69, C71, C87, and C90 together coordinate Zn(2+). The Mg(2+) site is built by D489, D491, and D493.

This sequence belongs to the RNA polymerase beta' chain family. RpoC1 subfamily. As to quaternary structure, in plastids the minimal PEP RNA polymerase catalytic core is composed of four subunits: alpha, beta, beta', and beta''. When a (nuclear-encoded) sigma factor is associated with the core the holoenzyme is formed, which can initiate transcription. It depends on Mg(2+) as a cofactor. Zn(2+) is required as a cofactor.

It is found in the plastid. The protein localises to the chloroplast. The catalysed reaction is RNA(n) + a ribonucleoside 5'-triphosphate = RNA(n+1) + diphosphate. DNA-dependent RNA polymerase catalyzes the transcription of DNA into RNA using the four ribonucleoside triphosphates as substrates. The chain is DNA-directed RNA polymerase subunit beta' from Triticum aestivum (Wheat).